The following is a 378-amino-acid chain: Quinolinate synthase (378 aa).

Iminosuccinate-binding residues include His-59 and Ser-80. Residue Cys-125 coordinates [4Fe-4S] cluster. Iminosuccinate is bound by residues 151-153 (YAN) and Ser-168. [4Fe-4S] cluster is bound at residue Cys-212. Iminosuccinate contacts are provided by residues 238–240 (HPE) and Thr-255. A [4Fe-4S] cluster-binding site is contributed by Cys-309.

Belongs to the quinolinate synthase family. Type 1 subfamily. [4Fe-4S] cluster serves as cofactor.

The protein localises to the cytoplasm. It catalyses the reaction iminosuccinate + dihydroxyacetone phosphate = quinolinate + phosphate + 2 H2O + H(+). It participates in cofactor biosynthesis; NAD(+) biosynthesis; quinolinate from iminoaspartate: step 1/1. Catalyzes the condensation of iminoaspartate with dihydroxyacetone phosphate to form quinolinate. The sequence is that of Quinolinate synthase from Burkholderia mallei (strain NCTC 10247).